The sequence spans 804 residues: Elongation factor G, mitochondrial (804 aa).

The N-terminal 63 residues, 1–63, are a transit peptide targeting the mitochondrion; it reads MSMHRVARAV…RHFSQSPIIR (63 aa). The 287-residue stretch at 99 to 385 folds into the tr-type G domain; that stretch reads RRVRNIGIAA…AVCDYLPNPA (287 aa). GTP contacts are provided by residues 108-115, 183-187, and 237-240; these read AHIDSGKT, DTPGH, and NKMD.

Belongs to the TRAFAC class translation factor GTPase superfamily. Classic translation factor GTPase family. EF-G/EF-2 subfamily.

It is found in the mitochondrion. It functions in the pathway protein biosynthesis; polypeptide chain elongation. In terms of biological role, mitochondrial GTPase that catalyzes the GTP-dependent ribosomal translocation step during translation elongation. During this step, the ribosome changes from the pre-translocational (PRE) to the post-translocational (POST) state as the newly formed A-site-bound peptidyl-tRNA and P-site-bound deacylated tRNA move to the P and E sites, respectively. Catalyzes the coordinated movement of the two tRNA molecules, the mRNA and conformational changes in the ribosome. This Botryotinia fuckeliana (strain B05.10) (Noble rot fungus) protein is Elongation factor G, mitochondrial (mef1).